Reading from the N-terminus, the 281-residue chain is LIM domain-containing protein G (281 aa).

3 consecutive LIM zinc-binding domains span residues 40–101, 141–205, and 206–262; these read LNCS…IKFN, DICT…SKQV, and NCFA…FTQP.

The sequence is that of LIM domain-containing protein G (limG) from Dictyostelium discoideum (Social amoeba).